A 718-amino-acid polypeptide reads, in one-letter code: Auxin response factor 2 (718 aa).

The interval 1–24 (MVGIDLNTVEEEEDEEEGGATGTV) is disordered. A compositionally biased stretch (acidic residues) spans 8–18 (TVEEEEDEEEG). Residues 147–249 (FCKTLTASDT…ELRLGVRRAA (103 aa)) constitute a DNA-binding region (TF-B3).

This sequence belongs to the ARF family. In terms of assembly, homo and heterodimers. In terms of tissue distribution, expressed in roots, culms, leaves and young panicles.

The protein localises to the nucleus. Auxin response factors (ARFs) are transcriptional factors that bind specifically to the DNA sequence 5'-TGTCTC-3' found in the auxin-responsive promoter elements (AuxREs). This chain is Auxin response factor 2 (ARF2), found in Oryza sativa subsp. japonica (Rice).